Here is a 75-residue protein sequence, read N- to C-terminus: Large ribosomal subunit protein bL31 (75 aa).

Residues Cys-16, Cys-18, Cys-36, and Cys-39 each contribute to the Zn(2+) site.

It belongs to the bacterial ribosomal protein bL31 family. Type A subfamily. Part of the 50S ribosomal subunit. It depends on Zn(2+) as a cofactor.

Its function is as follows. Binds the 23S rRNA. The protein is Large ribosomal subunit protein bL31 of Desulforapulum autotrophicum (strain ATCC 43914 / DSM 3382 / VKM B-1955 / HRM2) (Desulfobacterium autotrophicum).